A 576-amino-acid polypeptide reads, in one-letter code: K(+)/H(+) antiporter NhaP2 (576 aa).

The next 13 helical transmembrane spans lie at 6–26, 34–54, 58–78, 87–107, 109–129, 163–183, 185–205, 219–239, 242–262, 271–291, 299–319, 335–355, and 359–379; these read INSF…LSPM, ILLI…GGIL, YSTA…DGGM, VALW…TSIT, MMAA…GAIV, PMAV…DTEM, FSFM…LGLG, LADG…YAAS, LGGS…NKPT, VLDG…GLLL, ILIP…PVAV, WFIS…VFPM, and LPGA…SLLV. One can recognise an RCK C-terminal domain in the interval 405 to 486; the sequence is SGVEIYPSSE…LEALSNLFSQ (82 aa).

It belongs to the monovalent cation:proton antiporter 1 (CPA1) transporter (TC 2.A.36) family. NhaP2 subfamily.

The protein resides in the cell inner membrane. The catalysed reaction is K(+)(in) + H(+)(out) = K(+)(out) + H(+)(in). In terms of biological role, k(+)/H(+) antiporter that extrudes potassium in exchange for external protons and maintains the internal concentration of potassium under toxic levels. This chain is K(+)/H(+) antiporter NhaP2, found in Shewanella baltica (strain OS223).